A 418-amino-acid chain; its full sequence is Serum response factor homolog A (418 aa).

Disordered regions lie at residues 14 to 67, 144 to 170, 301 to 351, and 388 to 418; these read LGNV…GKKA, CLNTPDNPNSPSMANQNSNNNSNLLQQ, RLGK…NNNS, and SSSSASSSPASPNQFNYSNHSMPLNNQFPPC. Low complexity-rich tracts occupy residues 22–39 and 51–61; these read PSSPTSTSSSSSLTPTST and TSEPSSPSTGE. The MADS-box domain maps to 67 to 127; that stretch reads AGRRKIKIEF…GHVYTFATAK (61 aa). Composition is skewed to low complexity over residues 150–170, 306–351, and 388–399; these read NPNSPSMANQNSNNNSNLLQQ, NNNN…NNNS, and SSSSASSSPASP. Over residues 400-418 the composition is skewed to polar residues; the sequence is NQFNYSNHSMPLNNQFPPC.

It is found in the nucleus. Its function is as follows. Required for proper slug migration, spore differentiation and stalk differentiation (under nonbuffered conditions). Could be involved in late events of spore maturation necessary for spore stability. This chain is Serum response factor homolog A (srfA), found in Dictyostelium discoideum (Social amoeba).